The primary structure comprises 192 residues: Transcriptional activator GvpE (192 aa).

140-145 (KRKVYR) is a binding site for DNA. The tract at residues 150 to 181 (EATFDTVEPAVNRLVTFSLVLKALMIDCNARY) is leucine-zipper.

As to quaternary structure, interacts with GvpD, also with c-GvpD from H.salinarum.

The protein resides in the cytoplasm. Its activity is regulated as follows. The amount of protein that accumulates is controlled by GvpD; GvpD causes a reduction in the amount of GvpE, preventing accumulation of excessive amounts of gas vesicles. Functionally, plays a regulatory role in gas vesicle synthesis, activates transcription of the gvpA operon, and probably of the gvpD operon. Gas vesicles are hollow, gas filled proteinaceous nanostructures found in some microorganisms. They allow positioning of halobacteria at the optimal depth for growth in the poorly aerated, shallow brine pools of their habitat. In terms of biological role, expression of a 9.5 kb mc-vac DNA fragment containing 2 divergently transcribed regions (gvpD-gvpE-gvpF-gvpG-gvpH-gvpI-gvpJ-gvpK-gvpL-gvpM and gvpA-gvpC-gvpN-gvpO) allows H.volcanii to produce gas vesicles. The polypeptide is Transcriptional activator GvpE (Haloferax mediterranei (strain ATCC 33500 / DSM 1411 / JCM 8866 / NBRC 14739 / NCIMB 2177 / R-4) (Halobacterium mediterranei)).